Reading from the N-terminus, the 514-residue chain is Cytochrome P450 monooxygenase aneD (514 aa).

The chain crosses the membrane as a helical span at residues 6 to 26 (ICTLLAVIATTSLGLLFLSII). N-linked (GlcNAc...) asparagine glycans are attached at residues Asn113, Asn261, and Asn347. Cys424 contributes to the heme binding site.

This sequence belongs to the cytochrome P450 family. The cofactor is heme.

The protein resides in the membrane. The catalysed reaction is asperaculane D + reduced [NADPH--hemoprotein reductase] + O2 = asperaculane E + oxidized [NADPH--hemoprotein reductase] + H2O + H(+). It functions in the pathway secondary metabolite biosynthesis. In terms of biological role, cytochrome P450 monooxygenase; part of the gene cluster that mediates the biosynthesis of aculenes, a unique type of norsesquiterpenes that contain a nordaucane skeleton linked to an L-proline moiety and are of mixed biosynthetic origin. The pathway begins with the synthesis of dauca-4,7-diene by the terpene cyclase aneC using farnesyl pyrophosphate (FPP) as substrate. The cytochrome P450 monooxygenase aneF then performs the initial oxidation at C-12 of dauca-4,7-diene to yield asperaculane D. Asperaculane D is substrate of the cytochrome P450 monooxygenase aneD for C-10 hydroxylation to yield asperaculane E. The cytochrome P450 monooxygenase aneG then converts asperaculane E into aculene D via C-2 oxidation. The monomodular nonribosomal peptide synthtase aneB adenylates L-proline and the thiohydrolase aneE transfers this activated L-proline derivative to aculenes D and C to produce respectively aculenes B and A. The dioxygenase aneA converts aculene D into aculene C, and aculene B into aculene A by introducing the 5,6-alkene moiety. Asperculanes A, B, C and F, as well as 14-prolyl asperculane C, might be shunt products of the pathway. The sequence is that of Cytochrome P450 monooxygenase aneD from Aspergillus aculeatus (strain ATCC 16872 / CBS 172.66 / WB 5094).